A 636-amino-acid chain; its full sequence is Autophagy-related protein 20 (636 aa).

Disordered stretches follow at residues 1–68 (MQIN…QPHE) and 84–163 (NYMQ…EGKK). Over residues 10–23 (NSVTHLENNSPSRL) the composition is skewed to polar residues. Positions 27–49 (KTVEEHKEHEPDLQTQSEMRRES) are enriched in basic and acidic residues. Residues 50–64 (NGSPKDTAVTNQNGD) show a composition bias toward polar residues. The segment covering 122–133 (NRRKNSKERRRS) has biased composition (basic residues). The region spanning 160–305 (EGKKRAQILE…DFLDPNNKNW (146 aa)) is the PX domain. R196, S198, K222, and R271 together coordinate a 1,2-diacyl-sn-glycero-3-phospho-(1D-myo-inositol-3-phosphate).

This sequence belongs to the sorting nexin family.

The protein resides in the endosome membrane. The protein localises to the preautophagosomal structure membrane. In terms of biological role, required for cytoplasm to vacuole transport (Cvt), pexophagy and mitophagy. Also involved in endoplasmic reticulum-specific autophagic process and is essential for the survival of cells subjected to severe ER stress. Functions in protein retrieval from the endocytic pathway. The protein is Autophagy-related protein 20 (ATG20) of Kluyveromyces lactis (strain ATCC 8585 / CBS 2359 / DSM 70799 / NBRC 1267 / NRRL Y-1140 / WM37) (Yeast).